The primary structure comprises 174 residues: ATP synthase subunit delta (174 aa).

This sequence belongs to the ATPase delta chain family. F-type ATPases have 2 components, F(1) - the catalytic core - and F(0) - the membrane proton channel. F(1) has five subunits: alpha(3), beta(3), gamma(1), delta(1), epsilon(1). F(0) has three main subunits: a(1), b(2) and c(10-14). The alpha and beta chains form an alternating ring which encloses part of the gamma chain. F(1) is attached to F(0) by a central stalk formed by the gamma and epsilon chains, while a peripheral stalk is formed by the delta and b chains.

The protein localises to the cell inner membrane. In terms of biological role, f(1)F(0) ATP synthase produces ATP from ADP in the presence of a proton or sodium gradient. F-type ATPases consist of two structural domains, F(1) containing the extramembraneous catalytic core and F(0) containing the membrane proton channel, linked together by a central stalk and a peripheral stalk. During catalysis, ATP synthesis in the catalytic domain of F(1) is coupled via a rotary mechanism of the central stalk subunits to proton translocation. Functionally, this protein is part of the stalk that links CF(0) to CF(1). It either transmits conformational changes from CF(0) to CF(1) or is implicated in proton conduction. This Francisella tularensis subsp. mediasiatica (strain FSC147) protein is ATP synthase subunit delta.